Here is a 360-residue protein sequence, read N- to C-terminus: G-protein coupled receptor 183 (360 aa).

The Extracellular segment spans residues Met1–Arg30. The N-linked (GlcNAc...) asparagine glycan is linked to Asn7. Residues Ile31–Ile56 form a helical membrane-spanning segment. The Cytoplasmic portion of the chain corresponds to Gln57–Asp76. Residues Ile77–Phe94 traverse the membrane as a helical segment. Arg86 is a binding site for 7alpha,25-dihydroxycholesterol. At Asp95–Arg104 the chain is on the extracellular side. A disulfide bond links Cys103 and Cys180. A helical transmembrane segment spans residues Ile105–Ile126. Residues Tyr111 and Tyr115 each coordinate 7alpha,25-dihydroxycholesterol. An interaction with G proteins region spans residues Ser125–Val133. The Cytoplasmic portion of the chain corresponds to Asp127 to Lys148. Residues Cys149–Ile167 traverse the membrane as a helical segment. Residues Asn168–Ser191 lie on the Extracellular side of the membrane. Residues Leu192–Cys214 form a helical membrane-spanning segment. Topologically, residues Tyr215–Lys240 are cytoplasmic. The chain crosses the membrane as a helical span at residues Ala241–Ile264. Tyr259 provides a ligand contact to 7alpha,25-dihydroxycholesterol. The Extracellular segment spans residues Gln265 to Gln286. A helical transmembrane segment spans residues Ile287–Cys311. The Cytoplasmic segment spans residues Lys312–Lys360. Ser327 bears the Phosphoserine mark. The interval Glu339–Lys360 is disordered. Positions Glu347–Lys360 are enriched in polar residues.

It belongs to the G-protein coupled receptor 1 family. Homodimer and heterodimer. Heterodimerizes with CXCR5; leading to modulate the interaction between of CXCL13 and CXCR5.

The protein localises to the cell membrane. In terms of biological role, G-protein coupled receptor expressed in lymphocytes that acts as a chemotactic receptor for B-cells, T-cells, splenic dendritic cells, monocytes/macrophages and astrocytes. Receptor for oxysterol 7-alpha,25-dihydroxycholesterol (7-alpha,25-OHC) and other related oxysterols. Mediates cell positioning and movement of a number of cells by binding the 7-alpha,25-OHC ligand that forms a chemotactic gradient. Binding of 7-alpha,25-OHC mediates the correct localization of B-cells during humoral immune responses. Guides B-cell movement along the B-cell zone-T-cell zone boundary and later to interfollicular and outer follicular regions. Its specific expression during B-cell maturation helps position B-cells appropriately for mounting T-dependent antibody responses. Collaborates with CXCR5 to mediate B-cell migration; probably by forming a heterodimer with CXCR5 that affects the interaction between of CXCL13 and CXCR5. Also acts as a chemotactic receptor for some T-cells upon binding to 7-alpha,25-OHC ligand. Promotes follicular helper T (Tfh) cells differentiation by positioning activated T-cells at the follicle-T-zone interface, promoting contact of newly activated CD4 T-cells with activated dendritic cells and exposing them to Tfh-cell-promoting inducible costimulator (ICOS) ligand. Expression in splenic dendritic cells is required for their homeostasis, localization and ability to induce B- and T-cell responses: GPR183 acts as a chemotactic receptor in dendritic cells that mediates the accumulation of CD4(+) dendritic cells in bridging channels. Regulates migration of astrocytes and is involved in communication between astrocytes and macrophages. Promotes osteoclast precursor migration to bone surfaces. Signals constitutively through G(i)-alpha, but not G(s)-alpha or G(q)-alpha. Signals constitutively also via MAPK1/3 (ERK1/2). In Bos taurus (Bovine), this protein is G-protein coupled receptor 183 (GPR183).